A 451-amino-acid polypeptide reads, in one-letter code: MRVSWISGLLLVAHLAPSSAFNPLRFFLDDTFSSGATEEHFMGPSDDGFALQQPTNYDPSMPFPLDESASAAVDAVSNNYIVMFKPSVDKSKLEQHHRWIEHLHEKRSLDFKDVSTFLMKHTFEIGDAFLGYAGRFSPWLVAELQKHPDIALVEPDRVMHVMTEQTFAPWGLARVSHRKKLGFFTMTRYQYNETAGEGVTAYVIDTGINIEHQDFQGRATWGATIPTGEGEVDDHGHGTHVAGTIAGKTFGVSKNAKLVAVKVMRADGTGTVSDIIKGIEFAFKQSKKDKESIASVVNMSIGGDASTALDLAVNAAIAGGLFFAVAAGNDAEDACGTSPARVSNAMTVGASTWNDQIASFSNIGSCVDIFAPGSLILSDWIGSNRASMILSGTSMASPHVAGLAAYFISLDPSLANHPVELKKYMLKFALKDLLNGIPEDTPNVLAFNNYE.

The first 20 residues, 1-20 (MRVSWISGLLLVAHLAPSSA), serve as a signal peptide directing secretion. In terms of domain architecture, Inhibitor I9 spans 80–161 (YIVMFKPSVD…LVEPDRVMHV (82 aa)). The region spanning 169-451 (PWGLARVSHR…PNVLAFNNYE (283 aa)) is the Peptidase S8 domain. Residues D205, H237, and S394 each act as charge relay system in the active site.

Belongs to the peptidase S8 family.

The sequence is that of Subtilase-type proteinase psp3 (psp3) from Schizosaccharomyces pombe (strain 972 / ATCC 24843) (Fission yeast).